The following is a 567-amino-acid chain: Synaptotagmin-like protein 1 (567 aa).

A RabBD domain is found at 31–87 (LLDLSFLTEEEQEAISDVLKRDAHLRQLEEGRVSKLRASLEDPWQLKILTGDWFQEA). The interval 103–255 (RASIRRKKSP…VSSLNSSTLS (153 aa)) is disordered. Position 120 is a phosphoserine (Ser-120). 2 stretches are compositionally biased toward acidic residues: residues 122–135 (GEAEAAGEDTIEGE) and 170–184 (GQEEEPQDHECELEA). The span at 208-219 (ESQPTPAQSKAT) shows a compositional bias: polar residues. At Ser-220 the chain carries Phosphoserine. Positions 235 to 255 (SLDRMLSSSSSVSSLNSSTLS) are enriched in low complexity. C2 domains follow at residues 271-390 (VRGS…WLPL) and 403-532 (SRGL…VPWM).

As to quaternary structure, monomer. Binds NCF2 and NRXN1. Binds RAB27A that has been activated by GTP-binding via its N-terminus. Highly expressed in lung. Detected at lower levels in spleen, liver and kidney, and at very low levels in heart, brain and skeletal muscle. Expressed in cytotoxic T-lymphocytes (CTL).

Its subcellular location is the endomembrane system. The protein resides in the cell membrane. Binds phosphatidylinositol 3,4,5-trisphosphate. May play a role in vesicle trafficking. Acts as a RAB27A effector protein and may play a role in cytotoxic granule exocytosis in lymphocytes. This chain is Synaptotagmin-like protein 1 (Sytl1), found in Mus musculus (Mouse).